We begin with the raw amino-acid sequence, 93 residues long: MIHLGHILFLLLLPVAAAQTTPGERSSLPAFYPGTSGSCSGCGSLSLPLLAGLVAADAVASLLIVGAVFLCARPRRSPAQEDGKVYINMPGRG.

Positions 1–18 (MIHLGHILFLLLLPVAAA) are cleaved as a signal peptide. Over 19 to 48 (QTTPGERSSLPAFYPGTSGSCSGCGSLSLP) the chain is Extracellular. The chain crosses the membrane as a helical span at residues 49–69 (LLAGLVAADAVASLLIVGAVF). Over 70-93 (LCARPRRSPAQEDGKVYINMPGRG) the chain is Cytoplasmic. Position 86 is a phosphotyrosine (Y86). The segment at 86 to 88 (YIN) is GRB2 binding site. The segment at 86 to 89 (YINM) is PIK3R1 binding site.

Belongs to the DAP10 family. As to quaternary structure, interacts with CLEC5A. Forms an CLEC5A/TYROBP/HCST trimolecular complex depending almost solely on TYROBP. Homodimer; Disulfide-linked. Heterohexamer composed of four subunits of HCST/DAP10 and two subunits of KLRK1. Interacts (via transmembrane domain) with KLRK1 (via transmembrane domain); the interaction is required for KLRK1 NK cell surface and induces NK cell-mediated cytotoxicity. Interacts with PIK3R1 and GRB2. Interacts with CD300H. In terms of processing, phosphorylated; PIK3R1 and GRB2 associate specifically with tyrosine-phosphorylated HCST. Post-translationally, O-glycosylated. As to expression, predominantly expressed in hemopoietic cells such as NK cells, subset of T-cells and monocytes. Detected in leukocytes, spleen, and thymus.

It localises to the membrane. Its function is as follows. Transmembrane adapter protein which associates with KLRK1 to form an activation receptor KLRK1-HCST in lymphoid and myeloid cells; this receptor plays a major role in triggering cytotoxicity against target cells expressing cell surface ligands such as MHC class I chain-related MICA and MICB, and UL16-binding proteins (ULBPs); these ligands are up-regulated by stress conditions and pathological state such as viral infection and tumor transformation. Functions as a docking site for PI3-kinase PIK3R1 and GRB2. Interaction of ULBPs with KLRK1-HCST triggers calcium mobilization and activation of the PIK3R1, MAP2K/ERK, and JAK2/STAT5 signaling pathways. Both PIK3R1 and GRB2 are required for full KLRK1-HCST-mediated activation and ultimate killing of target cells. In NK cells, KLRK1-HCST signaling directly induces cytotoxicity and enhances cytokine production initiated via DAP12/TYROBP-associated receptors. In T-cells, it provides primarily costimulation for TCR-induced signals. KLRK1-HCST receptor plays a role in immune surveillance against tumors and is required for cytolysis of tumors cells; indeed, melanoma cells that do not express KLRK1 ligands escape from immune surveillance mediated by NK cells. This is Hematopoietic cell signal transducer (HCST) from Homo sapiens (Human).